The primary structure comprises 108 residues: MDASSQYSALPYPQPPRVPSAAPSAGRLPWSRVGEIVIFTFVSVLALYLLWLWVLKDCILLLKAQRGRSTEELIFGPGERPPVASADGSRPVPDPSPPVRRDLDLSRV.

Positions 1 to 25 (MDASSQYSALPYPQPPRVPSAAPSA) are disordered. The helical transmembrane segment at 35–55 (EIVIFTFVSVLALYLLWLWVL) threads the bilayer. Residues 73-108 (LIFGPGERPPVASADGSRPVPDPSPPVRRDLDLSRV) form a disordered region. A compositionally biased stretch (basic and acidic residues) spans 99 to 108 (VRRDLDLSRV).

This sequence belongs to the mastrevirus movement protein family. As to quaternary structure, interacts with the capsid protein (CP). Part of a MP-CP-viral DNA complex.

Its subcellular location is the host membrane. Functionally, involved in the viral transport within, and between cells. This is Movement protein from Megathyrsus maximus (PanSV).